Here is a 407-residue protein sequence, read N- to C-terminus: Arginine deiminase (407 aa).

The active-site Amidino-cysteine intermediate is Cys-397.

This sequence belongs to the arginine deiminase family.

The protein localises to the cytoplasm. It catalyses the reaction L-arginine + H2O = L-citrulline + NH4(+). Its pathway is amino-acid degradation; L-arginine degradation via ADI pathway; carbamoyl phosphate from L-arginine: step 1/2. The sequence is that of Arginine deiminase from Salmonella arizonae (strain ATCC BAA-731 / CDC346-86 / RSK2980).